The following is a 1437-amino-acid chain: MTLPHSLGGAGDPRPPQAMEVHRLEHRQEEEQKEERQHSLRMGSSVRRRTFRSSEEEHEFSAADYALAAALALTASSELSWEAQLRRQTSAVELEERGQKRVGFGNDWERTEIAFLQTHRLLRQRRDWKTLRRRTEEKVQEAKELRELCYGRGPWFWIPLRSHAVWEHTTVLLTCTVQASPPPQVTWYKNDTRIDPRLFRAGKYRITNNYGLLSLEIRRCAIEDSATYTVRVKNAHGQASSFAKVLVRTYLGKDAGFDSEIFKRSTFGPSVEFTSVLKPVFAREKEPFSLSCLFSEDVLDAESIQWFRDGSLLRSSRRRKILYTDRQASLKVSCTYKEDEGLYMVRVPSPFGPREQSTYVLVRDAEAENPGAPGSPLNVRCLDVNRDCLILTWAPPSDTRGNPITAYTIERCQGESGEWIACHEAPGGTCRCPIQGLVEGQSYRFRVRAISRVGSSVPSKASELVVMGDHDAARRKTEIPFDLGNKITISTDAFEDTVTIPSPPTNVHASEIREAYVVLAWEEPSPRDRAPLTYSLEKSVIGSGTWEAISSESPVRSPRFAVLDLEKKKSYVFRVRAMNQYGLSDPSEPSEPIALRGPPATLPPPAQVQAFRDTQTSVSLTWDPVKDPELLGYYIYSRKVGTSEWQTVNNKPIQGTRFTVPGLRTGKEYEFCVRSVSEAGVGESSAATEPIRVKQALATPSAPYGFALLNCGKNEMVIGWKPPKRRGGGKILGYFLDQHDSEELDWHAVNQQPIPTRVCKVSDLHEGHFYEFRARAANWAGVGELSAPSSLFECKEWTMPQPGPPYDVRASEVRATSLVLQWEPPLYMGAGPVTGYHVSFQEEGSEQWKPVTPGPISGTHLRVSDLQPGKSYVFQVQAMNSAGLGQPSMPTDPVLLEDKPGAHEIEVGVDEEGFIYLAFEAPEAPDSSEFQWSKDYKGPLDPQRVKIEDKVNKSKVILKEPGLEDLGTYSVIVTDADEDISASHTLTEEELEKLKKLSHEIRNPVIKLISGWNIDILERGEVRLWLEVEKLSPAAELHLIFNNKEIFSSPNRKINFDREKGLVEVIIQNLSEEDKGSYTAQLQDGKAKNQITLTLVDDDFDKLLRKADAKRRDWKRKQGPYFERPLQWKVTEDCQVQLTCKVTNTKKETRFQWFFQRAEMPDGQYDPETGTGLLCIEELSKKDKGIYRAMVSDDRGEDDTILDLTGDALDAIFTELGRIGALSATPLKIQGTEEGIRIFSKVKYYNVEYMKTTWFHKDKRLESGDRIRTGTTLDEIWLHILDPKDSDKGKYTLEIAAGKEVRQLSTDLSGQAFEDAMAEHQRLKTLAIIEKNRAKVVRGLPDVATIMEDKTLCLTCIVSGDPTPEISWLKNDQPVTFLDRYRMEVRGTEVTITIEKVNSEDSGRYGVFVKNKYGSETGQVTISVFKHGDEPKELKSM.

Positions 1–49 (MTLPHSLGGAGDPRPPQAMEVHRLEHRQEEEQKEERQHSLRMGSSVRRR) are disordered. Residues 20-38 (EVHRLEHRQEEEQKEERQH) are compositionally biased toward basic and acidic residues. The stretch at 120 to 149 (RLLRQRRDWKTLRRRTEEKVQEAKELRELC) forms a coiled coil. Ig-like C2-type domains lie at 154 to 246 (PWFW…AKVL) and 269 to 361 (PSVE…TYVL). 5 Fibronectin type-III domains span residues 375-469 (SPLN…VMGD), 503-598 (PPTN…LRGP), 604-696 (PPAQ…VKQA), 702-797 (APYG…CKEW), and 804-899 (PPYD…LEDK). Ig-like C2-type domains are found at residues 1120 to 1205 (PYFE…LDLT) and 1334 to 1423 (AKVV…VTIS).

In terms of assembly, homodimer.

It localises to the cytoplasm. The protein localises to the myofibril. Its subcellular location is the sarcomere. The protein resides in the m line. May link the intermediate filament cytoskeleton to the M-disk of the myofibrils in striated muscle. In Homo sapiens (Human), this protein is Myomesin-3 (MYOM3).